Reading from the N-terminus, the 306-residue chain is Small ribosomal subunit protein uS2 (306 aa).

The residue at position 2 (Ser-2) is an N-acetylserine. 2 laminin-binding regions span residues 161–180 and 205–229; these read IPCNNKGAHSVGLMWWMLAR and RDPEEIEKEEQAAAEKATTKEEFQG. 5 [DE]-W-[ST] repeats span residues 230-232, 245-247, 276-278, 286-288, and 304-306; these read EWT, DWS, and EWS. Residues 242 to 306 are laminin-binding; the sequence is EVADWSEGVQ…EWTGTTTEWS (65 aa). Positions 247-306 are disordered; that stretch reads SEGVQVPSVPIQQFTAERTDVPPAPKPTEDWSTQPASTDDWSAAPTAQASEWTGTTTEWS. A compositionally biased stretch (polar residues) spans 276–306; the sequence is DWSTQPASTDDWSAAPTAQASEWTGTTTEWS.

The protein belongs to the universal ribosomal protein uS2 family. Monomer (37LRP) and homodimer (67LR). Component of the small ribosomal subunit. Mature ribosomes consist of a small (40S) and a large (60S) subunit. The 40S subunit contains about 33 different proteins and 1 molecule of RNA (18S). The 60S subunit contains about 49 different proteins and 3 molecules of RNA (28S, 5.8S and 5S). Interacts with rps21. Interacts with several laminins including at least lamb1. Interacts with mdk. Acylated. Acylation may be a prerequisite for conversion of the monomeric 37 kDa laminin receptor precursor (37LRP) to the mature dimeric 67 kDa laminin receptor (67LR), and may provide a mechanism for membrane association. In terms of processing, cleaved by stromelysin-3 (ST3) at the cell surface. Cleavage by stromelysin-3 may be a mechanism to alter cell-extracellular matrix interactions.

It is found in the cell membrane. Its subcellular location is the cytoplasm. The protein resides in the nucleus. In terms of biological role, required for the assembly and/or stability of the 40S ribosomal subunit. Required for the processing of the 20S rRNA-precursor to mature 18S rRNA in a late step of the maturation of 40S ribosomal subunits. Also functions as a cell surface receptor for laminin. Plays a role in cell adhesion to the basement membrane and in the consequent activation of signaling transduction pathways. May play a role in cell fate determination and tissue morphogenesis. The sequence is that of Small ribosomal subunit protein uS2 (rpsa) from Xenopus laevis (African clawed frog).